Consider the following 710-residue polypeptide: Probable threonine--tRNA ligase 1, cytoplasmic (710 aa).

Residues 1–35 (MSDSQENKPVETPTEVKPVAEKKPAAEKKEKKPAV) form a disordered region. Positions 18–33 (PVAEKKPAAEKKEKKP) are enriched in basic and acidic residues. The TGS domain maps to 72–137 (KEEPINVTLP…EADCNLQLCK (66 aa)).

The protein belongs to the class-II aminoacyl-tRNA synthetase family.

Its subcellular location is the cytoplasm. It carries out the reaction tRNA(Thr) + L-threonine + ATP = L-threonyl-tRNA(Thr) + AMP + diphosphate + H(+). The protein is Probable threonine--tRNA ligase 1, cytoplasmic (thrS1) of Dictyostelium discoideum (Social amoeba).